A 65-amino-acid polypeptide reads, in one-letter code: DNA-directed RNA polymerase subunit Rpo10 (65 aa).

Residues cysteine 7, cysteine 10, cysteine 44, and cysteine 45 each coordinate Zn(2+).

This sequence belongs to the archaeal Rpo10/eukaryotic RPB10 RNA polymerase subunit family. As to quaternary structure, part of the RNA polymerase complex. Zn(2+) is required as a cofactor.

Its subcellular location is the cytoplasm. It carries out the reaction RNA(n) + a ribonucleoside 5'-triphosphate = RNA(n+1) + diphosphate. Functionally, DNA-dependent RNA polymerase (RNAP) catalyzes the transcription of DNA into RNA using the four ribonucleoside triphosphates as substrates. This chain is DNA-directed RNA polymerase subunit Rpo10, found in Pyrobaculum arsenaticum (strain DSM 13514 / JCM 11321 / PZ6).